Reading from the N-terminus, the 218-residue chain is MPDITAKLVKELRDKTGAGMMDCKKALVESDADMEKAVEWLRQKGISSAEKKSGRVAAEGAIGSYIHTGSRVGVLLELNCETDFVARGELFQGLLRDISMQIAACPNVEFVAVDDIPVEVSDKEKSIEMGRDDLSGKPDQIKEKIVAGRISKRLKELALIEQPFIRDTSITVEQLVKQVAGQIGENLRIRRFTRYTLGEGIETDQSDFAAEVASISSK.

Positions 82–85 are involved in Mg(2+) ion dislocation from EF-Tu; sequence TDFV.

This sequence belongs to the EF-Ts family.

It is found in the cytoplasm. Functionally, associates with the EF-Tu.GDP complex and induces the exchange of GDP to GTP. It remains bound to the aminoacyl-tRNA.EF-Tu.GTP complex up to the GTP hydrolysis stage on the ribosome. This chain is Elongation factor Ts, found in Prochlorococcus marinus (strain MIT 9211).